A 437-amino-acid polypeptide reads, in one-letter code: tRNA modification GTPase MnmE (437 aa).

Residues arginine 21, glutamate 80, and arginine 120 each coordinate (6S)-5-formyl-5,6,7,8-tetrahydrofolate. Residues 218-361 form the TrmE-type G domain; that stretch reads GFVVVLAGPP…LLDRVAAAAG (144 aa). Asparagine 228 serves as a coordination point for K(+). GTP is bound by residues 228 to 233, 247 to 253, and 272 to 275; these read NAGKST, SPIPGTT, and DTAG. Serine 232 is a Mg(2+) binding site. K(+)-binding residues include serine 247, isoleucine 249, and threonine 252. Residue threonine 253 participates in Mg(2+) binding. Lysine 437 contacts (6S)-5-formyl-5,6,7,8-tetrahydrofolate.

Belongs to the TRAFAC class TrmE-Era-EngA-EngB-Septin-like GTPase superfamily. TrmE GTPase family. In terms of assembly, homodimer. Heterotetramer of two MnmE and two MnmG subunits. K(+) serves as cofactor.

Its subcellular location is the cytoplasm. Its function is as follows. Exhibits a very high intrinsic GTPase hydrolysis rate. Involved in the addition of a carboxymethylaminomethyl (cmnm) group at the wobble position (U34) of certain tRNAs, forming tRNA-cmnm(5)s(2)U34. The polypeptide is tRNA modification GTPase MnmE (Methylobacterium sp. (strain 4-46)).